We begin with the raw amino-acid sequence, 974 residues long: Apical junction component 1 homolog (974 aa).

3 disordered regions span residues 23-137, 201-233, and 306-326; these read PGLT…PSYP, ARSS…PRHV, and CSRP…GGSY. Residue serine 52 is modified to Phosphoserine. Over residues 69–79 the composition is skewed to pro residues; that stretch reads EPPPPEPAPPR. Over residues 116–134 the composition is skewed to basic and acidic residues; that stretch reads RGREAQRAVRVEGSPRREP. Position 129 is a phosphoserine (serine 129). Over residues 201 to 216 the composition is skewed to polar residues; sequence ARSSRSCAPRETTSWA. An Omega-N-methylarginine modification is found at arginine 322. Phosphoserine occurs at positions 468, 509, and 512. The interval 539 to 576 is disordered; sequence DLRSVDRPTAKGWELPGGRPRQPVSTVPEGPASSRQRS. Serine 593 is modified (phosphoserine). Residues 618–661 are disordered; the sequence is AGPGGATLLAPSRSPPASAGSTEEPTGSGEAADASPEPSADEDD. Low complexity predominate over residues 623 to 636; that stretch reads ATLLAPSRSPPASA. Arginine 749 is subject to Asymmetric dimethylarginine; alternate. Arginine 749 carries the post-translational modification Omega-N-methylarginine; alternate.

It is found in the apical cell membrane. The protein localises to the cell projection. The protein resides in the cilium. Its subcellular location is the cell junction. It localises to the adherens junction. Functionally, may be involved in the control of adherens junction integrity. This Mus musculus (Mouse) protein is Apical junction component 1 homolog (Ajm1).